The chain runs to 90 residues: Probable Fe(2+)-trafficking protein (90 aa).

The protein belongs to the Fe(2+)-trafficking protein family.

Its function is as follows. Could be a mediator in iron transactions between iron acquisition and iron-requiring processes, such as synthesis and/or repair of Fe-S clusters in biosynthetic enzymes. The sequence is that of Probable Fe(2+)-trafficking protein from Hydrogenovibrio crunogenus (strain DSM 25203 / XCL-2) (Thiomicrospira crunogena).